Reading from the N-terminus, the 43-residue chain is SPbeta prophage-derived uncharacterized protein YopG (43 aa).

In Bacillus subtilis (strain 168), this protein is SPbeta prophage-derived uncharacterized protein YopG (yopG).